The following is a 335-amino-acid chain: MLRKLVTGALAAALLLSGQSNAQNACQQTQQLSGGRTINNKNETGNGNGNYKYEIWRDGNGGSLTLYPKDAAFKASWNNSGDFLGRVGLTFNKPAATNLGGDLIANYNYKKSGSDGGTYSYIGIYGWMDNPQIEYYVVDDWMHNRGAPGGSYMGSQKGTITVDGGTYKVWSGQRTGASKWGTSTFTQIFSIRTSPRQCGSINVSEHFRQWQKLGLRLGGLMEAQLLAESGGGSGYVDFTYATITIGGSSSNASAPSNNNNNNNNNNDNNGNWNNWNNNNNNNNNNNNNNNNNNNNQGGGNCAAIWGQCGGSGYNGPKCCKQGSCKQINQWYSQCQ.

Positions 1–22 are cleaved as a signal peptide; the sequence is MLRKLVTGALAAALLLSGQSNA. The GH11 domain maps to 39 to 241; the sequence is NNKNETGNGN…GSGYVDFTYA (203 aa). N-linked (GlcNAc...) asparagine glycans are attached at residues asparagine 42 and asparagine 78. The active-site Nucleophile is the glutamate 134. N-linked (GlcNAc...) asparagine glycosylation is present at asparagine 202. Glutamate 228 serves as the catalytic Proton donor. The N-linked (GlcNAc...) asparagine glycan is linked to asparagine 251. The interval 251–291 is disordered; that stretch reads NASAPSNNNNNNNNNNDNNGNWNNWNNNNNNNNNNNNNNNN. Residues 257–291 are compositionally biased toward low complexity; sequence NNNNNNNNNNDNNGNWNNWNNNNNNNNNNNNNNNN. The CBM1 domain maps to 300–335; the sequence is NCAAIWGQCGGSGYNGPKCCKQGSCKQINQWYSQCQ.

This sequence belongs to the glycosyl hydrolase 11 (cellulase G) family.

The protein localises to the secreted. It carries out the reaction Endohydrolysis of (1-&gt;4)-beta-D-xylosidic linkages in xylans.. The protein operates within glycan degradation; xylan degradation. In terms of biological role, endo-1,4-beta-xylanase involved in the hydrolysis of xylan, a major structural heterogeneous polysaccharide found in plant biomass representing the second most abundant polysaccharide in the biosphere, after cellulose. The chain is Endo-1,4-beta-xylanase S20 (xynS20) from Neocallimastix patriciarum (Rumen fungus).